A 344-amino-acid polypeptide reads, in one-letter code: GPALPP motifs-containing protein 1 (344 aa).

The interval 1-309 (MARDLIGPAL…QERIPFDRDK (309 aa)) is disordered. Ala2 carries the post-translational modification N-acetylalanine. The short motif at 7-12 (GPALPP) is the GPALPP motif 1 element. Ser28 is subject to Phosphoserine. The GPALPP motif 2 motif lies at 30-35 (GPALPP). 2 stretches are compositionally biased toward acidic residues: residues 58 to 67 (GNQESEEDDT) and 80 to 93 (DDNDDDDDDDDDDG). Positions 96-101 (GPALPP) match the GPALPP motif 3 motif. Ser109 carries the post-translational modification Phosphoserine. The segment covering 111 to 120 (PRPIIGPALP) has biased composition (pro residues). A GPALPP motif 4 motif is present at residues 116–121 (GPALPP). Positions 128–137 (QKSDKGRDDP) are enriched in basic and acidic residues. At Thr142 the chain carries Phosphothreonine. Ser144 and Ser145 each carry phosphoserine. Basic and acidic residues-rich tracts occupy residues 167-191 (EFEKRAQRMKEKLTKGDDDSSKPIV), 231-265 (PADRERKAKETQEARKSSSKKDEEHILSGRDKRLA), 273-283 (ESKRSESLMDI), and 291-309 (KAAEDKNKPQERIPFDRDK). Lys275 is covalently cross-linked (Glycyl lysine isopeptide (Lys-Gly) (interchain with G-Cter in SUMO2)). Lys312 participates in a covalent cross-link: Glycyl lysine isopeptide (Lys-Gly) (interchain with G-Cter in SUMO2).

The chain is GPALPP motifs-containing protein 1 (GPALPP1) from Pongo abelii (Sumatran orangutan).